A 41-amino-acid chain; its full sequence is GCKKDRKPCSYHADCCNCCLSGICAPSTNWILPGCSTSTFT.

4 disulfides stabilise this stretch: Cys2–Cys16, Cys9–Cys19, Cys15–Cys24, and Cys18–Cys35. Position 8 is a 4-hydroxyproline (Pro8). Pro26 bears the 4-hydroxyproline mark.

Position 41 corresponds to a L-threonine, and not a D-threonine as firstly supposed. As to expression, expressed by the venom duct.

It localises to the secreted. Functionally, iota-conotoxins bind to voltage-gated sodium channels (Nav) and act as agonists by shifting the voltage-dependence of activation to more hyperpolarized levels. Both natural (L-Thr form) and synthetic (D-Thr form) peptides cause paralysis and death following intracranial injection and grooming and hypersensitivity upon intraperitoneal injection into mice. The L-Thr form of the peptide is 7-fold more potent than the D-Thr form. Both natural peptide (L-Thr form) and synthetic peptide (D-Thr form) are active on nerve, and on muscle. The sequence is that of Iota-conotoxin-like r11d from Conus radiatus (Rayed cone).